Here is a 755-residue protein sequence, read N- to C-terminus: Tryptophan 2-monooxygenase (755 aa).

FMN is bound by residues S247, E267, K275, and R295. R295 is a substrate binding site.

Belongs to the tryptophan 2-monooxygenase family. FMN is required as a cofactor.

The catalysed reaction is L-tryptophan + O2 = indole-3-acetamide + CO2 + H2O. It functions in the pathway plant hormone metabolism; auxin biosynthesis. This chain is Tryptophan 2-monooxygenase (tms1), found in Rhizobium radiobacter (Agrobacterium tumefaciens).